A 440-amino-acid polypeptide reads, in one-letter code: Xylose isomerase (440 aa).

Catalysis depends on residues His101 and Asp104. Glu232, Glu268, His271, Asp296, Asp307, Asp309, and Asp339 together coordinate Mg(2+).

This sequence belongs to the xylose isomerase family. As to quaternary structure, homotetramer. It depends on Mg(2+) as a cofactor.

It localises to the cytoplasm. It carries out the reaction alpha-D-xylose = alpha-D-xylulofuranose. The chain is Xylose isomerase from Cronobacter sakazakii (strain ATCC BAA-894) (Enterobacter sakazakii).